The following is a 118-amino-acid chain: Small ribosomal subunit protein uS13 (118 aa).

Positions 91-118 are disordered; it reads HRRGLPVRGQRTKTNARTRKGPRKPIKK.

The protein belongs to the universal ribosomal protein uS13 family. Part of the 30S ribosomal subunit. Forms a loose heterodimer with protein S19. Forms two bridges to the 50S subunit in the 70S ribosome.

Its function is as follows. Located at the top of the head of the 30S subunit, it contacts several helices of the 16S rRNA. In the 70S ribosome it contacts the 23S rRNA (bridge B1a) and protein L5 of the 50S subunit (bridge B1b), connecting the 2 subunits; these bridges are implicated in subunit movement. Contacts the tRNAs in the A and P-sites. The protein is Small ribosomal subunit protein uS13 of Photorhabdus laumondii subsp. laumondii (strain DSM 15139 / CIP 105565 / TT01) (Photorhabdus luminescens subsp. laumondii).